The sequence spans 348 residues: Sulfate/thiosulfate import ATP-binding protein CysA (348 aa).

An ABC transporter domain is found at I3 to I237. An ATP-binding site is contributed by G35 to T42.

Belongs to the ABC transporter superfamily. Sulfate/tungstate importer (TC 3.A.1.6) family. As to quaternary structure, the complex is composed of two ATP-binding proteins (CysA), two transmembrane proteins (CysT and CysW) and a solute-binding protein (CysP).

The protein resides in the cell inner membrane. The catalysed reaction is sulfate(out) + ATP + H2O = sulfate(in) + ADP + phosphate + H(+). The enzyme catalyses thiosulfate(out) + ATP + H2O = thiosulfate(in) + ADP + phosphate + H(+). Functionally, part of the ABC transporter complex CysAWTP involved in sulfate/thiosulfate import. Responsible for energy coupling to the transport system. This Methylococcus capsulatus (strain ATCC 33009 / NCIMB 11132 / Bath) protein is Sulfate/thiosulfate import ATP-binding protein CysA.